Consider the following 317-residue polypeptide: Tumor-associated calcium signal transducer 2 (317 aa).

A signal peptide spans 1–24 (MARGLDLAPLLLLLLAMATRFCTA). Residues 25 to 270 (QSNCTCPTNK…QFSMKRLTAG (246 aa)) are Extracellular-facing. N-linked (GlcNAc...) asparagine glycosylation is present at N27. In terms of domain architecture, Thyroglobulin type-1 spans 64 to 139 (TSKCLLLKAR…TDKGDQSLRC (76 aa)). Cystine bridges form between C67-C102, C113-C119, and C121-C139. The N-linked (GlcNAc...) asparagine glycan is linked to N114. Residues N162 and N202 are each glycosylated (N-linked (GlcNAc...) asparagine). A helical transmembrane segment spans residues 271-291 (VIAVIAVVSVAVVAGVVVLVV). Topologically, residues 292–317 (TKRRKSGKYKKVELKELGEMRSEPSL) are cytoplasmic.

Belongs to the EPCAM family. As to expression, expressed in kidney, lung, ovary and testis. High levels of expression in immortalized keratinocytes.

It localises to the membrane. In terms of biological role, may function as a growth factor receptor. This is Tumor-associated calcium signal transducer 2 (Tacstd2) from Mus musculus (Mouse).